The following is a 1045-amino-acid chain: Tyrosine-protein kinase-like otk (1045 aa).

An N-terminal signal peptide occupies residues 1–25; the sequence is MPIVMDMNMLLMLSLAFTVMAPASA. Ig-like C2-type domains are found at residues 26–116, 115–200, 260–373, 376–469, and 474–564; these read SSSR…AKLS, LSVI…RVMS, PEGL…APVN, PGAL…VAIN, and PRFS…VRLL. Over 26–587 the chain is Extracellular; it reads SSSRFTQPPQ…AGDGFLVTRA (562 aa). 4 cysteine pairs are disulfide-bonded: C49–C97, C139–C189, C285–C362, and C406–C453. N-linked (GlcNAc...) asparagine glycosylation is found at N344, N424, N435, N442, N450, N463, N518, and N530. C496 and C548 are joined by a disulfide. The chain crosses the membrane as a helical span at residues 588–608; sequence VLITMTVALAYIVLVVGLMLW. At 609-1045 the chain is on the cytoplasmic side; the sequence is CRYRRQARKA…LSKAMQAAEK (437 aa). The tract at residues 628–676 is disordered; that stretch reads AGGDQAESGKNTEQEPCLSKQRNGHGKSRTAANGDAQKSDDTACSQQSK. S681 carries the post-translational modification Phosphoserine. The region spanning 695–1040 is the Protein kinase; inactive domain; it reads LSELIQIGRG…QLGAALSKAM (346 aa). Residues 722 to 790 are disordered; that stretch reads ASPSDKDADT…QPQEQAQSES (69 aa). A compositionally biased stretch (basic and acidic residues) spans 725–736; it reads SDKDADTEKQHS. Gly residues predominate over residues 743–752; it reads GASGASGCGS. Residues 771–782 show a composition bias toward acidic residues; sequence DDIEEIKEEEQP.

The protein belongs to the protein kinase superfamily. Tyr protein kinase family. Insulin receptor subfamily. In terms of assembly, interacts with plexA; component of a receptor complex that mediates the repulsive signaling in response to Semaphorin ligands.

Its subcellular location is the cell membrane. Acts as a calcium-dependent, homophilic cell adhesion molecule that regulates neural recognition during the development of the nervous system. Component of the repulsive Plexin signaling response to regulate motor axon guidance at the embryonic stage. Also component of a receptor complex that is required in the adult visual system to innervate the lamina layer; specific targeting of R1-R6 axons. The polypeptide is Tyrosine-protein kinase-like otk (Drosophila mojavensis (Fruit fly)).